The sequence spans 171 residues: 3-hydroxydecanoyl-[acyl-carrier-protein] dehydratase (171 aa).

Histidine 70 is a catalytic residue.

This sequence belongs to the thioester dehydratase family. FabA subfamily. As to quaternary structure, homodimer.

It is found in the cytoplasm. The enzyme catalyses a (3R)-hydroxyacyl-[ACP] = a (2E)-enoyl-[ACP] + H2O. It catalyses the reaction (3R)-hydroxydecanoyl-[ACP] = (2E)-decenoyl-[ACP] + H2O. The catalysed reaction is (2E)-decenoyl-[ACP] = (3Z)-decenoyl-[ACP]. It functions in the pathway lipid metabolism; fatty acid biosynthesis. Its function is as follows. Necessary for the introduction of cis unsaturation into fatty acids. Catalyzes the dehydration of (3R)-3-hydroxydecanoyl-ACP to E-(2)-decenoyl-ACP and then its isomerization to Z-(3)-decenoyl-ACP. Can catalyze the dehydratase reaction for beta-hydroxyacyl-ACPs with saturated chain lengths up to 16:0, being most active on intermediate chain length. The protein is 3-hydroxydecanoyl-[acyl-carrier-protein] dehydratase of Hydrogenovibrio crunogenus (strain DSM 25203 / XCL-2) (Thiomicrospira crunogena).